A 715-amino-acid chain; its full sequence is DNA-directed RNA polymerase subunit beta' (715 aa).

Residues Cys69, Cys71, Cys87, and Cys90 each coordinate Zn(2+). Residues 244–272 (APESQSEVIEAQGPVPQAEEEKQRDQSIQ) are disordered. Residues Asp520, Asp522, and Asp524 each contribute to the Mg(2+) site.

Belongs to the RNA polymerase beta' chain family. RpoC1 subfamily. As to quaternary structure, in plastids the minimal PEP RNA polymerase catalytic core is composed of four subunits: alpha, beta, beta', and beta''. When a (nuclear-encoded) sigma factor is associated with the core the holoenzyme is formed, which can initiate transcription. Mg(2+) is required as a cofactor. It depends on Zn(2+) as a cofactor.

The protein resides in the plastid. It localises to the chloroplast. It carries out the reaction RNA(n) + a ribonucleoside 5'-triphosphate = RNA(n+1) + diphosphate. Functionally, DNA-dependent RNA polymerase catalyzes the transcription of DNA into RNA using the four ribonucleoside triphosphates as substrates. This is DNA-directed RNA polymerase subunit beta' from Zygnema circumcarinatum (Green alga).